Reading from the N-terminus, the 376-residue chain is Serine-arginine protein 55 (376 aa).

One can recognise an RRM 1 domain in the interval 4-74 (SRVYVGGLPY…ERVVVEPARG (71 aa)). Residues 73–114 (RGTARGSNRDRYDDRYGGRRGGGGGRYNEKNKNSRSSSRYGP) form a disordered region. A compositionally biased stretch (basic and acidic residues) spans 79–89 (SNRDRYDDRYG). The RRM 2 domain maps to 120 to 193 (YRLIVENLSS…RRIHLVEDRR (74 aa)). Serine 165 carries the post-translational modification Phosphoserine. Residues 185–194 (RIHLVEDRRG) are compositionally biased toward basic and acidic residues. The disordered stretch occupies residues 185–376 (RIHLVEDRRG…PDRNNESMDD (192 aa)). The segment covering 196–205 (RSGGGGGSGR) has biased composition (gly residues). Basic residues-rich tracts occupy residues 215–263 (SRSR…SRSN) and 271–283 (SKSK…RSRS). A compositionally biased stretch (basic and acidic residues) spans 284 to 304 (PKRERDSRSRSRSVSKRESRS).

The protein belongs to the splicing factor SR family. In terms of processing, extensively phosphorylated on serine residues in the RS domain.

It localises to the nucleus. Functionally, essential for development. May have a critical role in splicing or in controlling alternative splice site use of at least some pre-mRNA in vivo. Not required for all splicing. May play a general role in the condensation or decondensation of chromatin. This chain is Serine-arginine protein 55 (B52), found in Drosophila melanogaster (Fruit fly).